The following is a 307-amino-acid chain: Urease accessory protein UreD (307 aa).

This sequence belongs to the UreD family. As to quaternary structure, ureD, UreF and UreG form a complex that acts as a GTP-hydrolysis-dependent molecular chaperone, activating the urease apoprotein by helping to assemble the nickel containing metallocenter of UreC. The UreE protein probably delivers the nickel.

It localises to the cytoplasm. In terms of biological role, required for maturation of urease via the functional incorporation of the urease nickel metallocenter. This is Urease accessory protein UreD from Prochlorococcus marinus (strain NATL1A).